The sequence spans 1020 residues: DNA-directed RNA polymerase 2, chloroplastic/mitochondrial (1020 aa).

Positions Lys314–Lys336 are disordered. Active-site residues include Asp721, Lys796, and Asp953.

Belongs to the phage and mitochondrial RNA polymerase family. As to expression, the highest levels of expression are detected in the mature leaves. The level of expression is lowest in the cotyledons.

Its subcellular location is the plastid. The protein localises to the chloroplast. The protein resides in the mitochondrion. It carries out the reaction RNA(n) + a ribonucleoside 5'-triphosphate = RNA(n+1) + diphosphate. In terms of biological role, DNA-dependent RNA polymerase catalyzes the transcription of DNA into RNA using the four ribonucleoside triphosphates as substrates. This chain is DNA-directed RNA polymerase 2, chloroplastic/mitochondrial (RPOT2), found in Nicotiana sylvestris (Wood tobacco).